The chain runs to 419 residues: CinA-like protein (419 aa).

Belongs to the CinA family.

In Parasynechococcus marenigrum (strain WH8102), this protein is CinA-like protein.